The primary structure comprises 275 residues: Diaminopimelate epimerase (275 aa).

Substrate is bound by residues Asn13, Gln46, and Asn66. The active-site Proton donor is Cys75. Substrate contacts are provided by residues 76–77 (GN), Asn159, Asn192, and 210–211 (ER). Cys219 (proton acceptor) is an active-site residue. Position 220–221 (220–221 (GS)) interacts with substrate.

Belongs to the diaminopimelate epimerase family. Homodimer.

The protein resides in the cytoplasm. The enzyme catalyses (2S,6S)-2,6-diaminopimelate = meso-2,6-diaminopimelate. Its pathway is amino-acid biosynthesis; L-lysine biosynthesis via DAP pathway; DL-2,6-diaminopimelate from LL-2,6-diaminopimelate: step 1/1. Its function is as follows. Catalyzes the stereoinversion of LL-2,6-diaminopimelate (L,L-DAP) to meso-diaminopimelate (meso-DAP), a precursor of L-lysine and an essential component of the bacterial peptidoglycan. The protein is Diaminopimelate epimerase of Idiomarina loihiensis (strain ATCC BAA-735 / DSM 15497 / L2-TR).